Reading from the N-terminus, the 83-residue chain is U3-theraphotoxin-Cg1a (83 aa).

The signal sequence occupies residues 1–23 (MRTFTLIAILTCAVLVIFHAAAA). Positions 24 to 44 (EELEAQDVIETEALATLDEER) are excised as a propeptide. 3 disulfides stabilise this stretch: C48–C61, C52–C75, and C69–C80.

Belongs to the neurotoxin 12 (Hwtx-2) family. 03 (juruin) subfamily. Contains 3 disulfide bonds. Two different connectivities are observed in similar proteins (C1-C3, C2-C5, C4-C6 or C1-C4, C2-C5, C3-C6). As to expression, expressed by the venom gland.

It is found in the secreted. Functionally, probable ion channel inhibitor. The protein is U3-theraphotoxin-Cg1a of Chilobrachys guangxiensis (Chinese earth tiger tarantula).